The chain runs to 446 residues: WD repeat domain phosphoinositide-interacting protein 1 (446 aa).

The Nuclear receptor interaction signature appears at Leu-131–Leu-136. The WD 1 repeat unit spans residues Ala-184 to Glu-224. The L/FRRG motif signature appears at Phe-225–Gly-228. WD repeat units lie at residues Lys-230–Pro-269 and Ser-312–Cys-351. A disordered region spans residues Ala-386–Leu-406.

Belongs to the WD repeat PROPPIN family. In terms of assembly, interacts with androgen receptor (AR) and the estrogen receptors ESR1 and ESR2. Interacts with WIPI2. Interacts with WDR45. Interacts with ATG16L1. May interact with NUDC.

The protein localises to the golgi apparatus. It is found in the trans-Golgi network. Its subcellular location is the endosome. The protein resides in the cytoplasmic vesicle. It localises to the clathrin-coated vesicle. The protein localises to the preautophagosomal structure membrane. It is found in the cytoplasm. Its subcellular location is the cytoskeleton. In terms of biological role, component of the autophagy machinery that controls the major intracellular degradation process by which cytoplasmic materials are packaged into autophagosomes and delivered to lysosomes for degradation. Plays an important role in starvation- and calcium-mediated autophagy, as well as in mitophagy. Functions downstream of the ULK1 and PI3-kinases that produce phosphatidylinositol 3-phosphate (PtdIns3P) on membranes of the endoplasmic reticulum once activated. Binds phosphatidylinositol 3-phosphate (PtdIns3P), and maybe other phosphoinositides including PtdIns3,5P2 and PtdIns5P, and is recruited to phagophore assembly sites at the endoplasmic reticulum membranes. There, it assists WIPI2 in the recruitment of ATG12-ATG5-ATG16L1, a complex that directly controls the elongation of the nascent autophagosomal membrane. Together with WDR45/WIPI4, promotes ATG2 (ATG2A or ATG2B)-mediated lipid transfer by enhancing ATG2-association with phosphatidylinositol 3-monophosphate (PI3P)-containing membranes. Involved in xenophagy of Staphylococcus aureus. Invading S.aureus cells become entrapped in autophagosome-like WIPI1 positive vesicles targeted for lysosomal degradation. Also plays a distinct role in controlling the transcription of melanogenic enzymes and melanosome maturation, a process that is distinct from starvation-induced autophagy. May also regulate the trafficking of proteins involved in the mannose-6-phosphate receptor (MPR) recycling pathway. This is WD repeat domain phosphoinositide-interacting protein 1 (Wipi1) from Mus musculus (Mouse).